We begin with the raw amino-acid sequence, 815 residues long: Probable disease resistance protein At5g66910 (815 aa).

Residues 1 to 150 (MVVVDWLGLG…NINKKLDRLS (150 aa)) form the RPW8 domain. NB-ARC domains lie at 156–283 (PLVS…DVWQ) and 341–440 (SPDE…DIWM). 196–203 (GPPGCGKT) lines the ATP pocket. LRR repeat units lie at residues 656-678 (NLQE…IPEV), 680-702 (SLKT…IGNL), 704-726 (RLEV…TERL), and 728-750 (NLRS…IGKL).

Belongs to the disease resistance NB-LRR family.

In terms of biological role, probable disease resistance protein. This Arabidopsis thaliana (Mouse-ear cress) protein is Probable disease resistance protein At5g66910.